Here is a 203-residue protein sequence, read N- to C-terminus: Ribosomal RNA large subunit methyltransferase E (203 aa).

Residues glycine 59, tryptophan 61, aspartate 79, asparagine 95, and aspartate 118 each contribute to the S-adenosyl-L-methionine site. The active-site Proton acceptor is the lysine 158.

Belongs to the class I-like SAM-binding methyltransferase superfamily. RNA methyltransferase RlmE family.

The protein resides in the cytoplasm. It catalyses the reaction uridine(2552) in 23S rRNA + S-adenosyl-L-methionine = 2'-O-methyluridine(2552) in 23S rRNA + S-adenosyl-L-homocysteine + H(+). Functionally, specifically methylates the uridine in position 2552 of 23S rRNA at the 2'-O position of the ribose in the fully assembled 50S ribosomal subunit. The protein is Ribosomal RNA large subunit methyltransferase E of Wigglesworthia glossinidia brevipalpis.